We begin with the raw amino-acid sequence, 417 residues long: Probable serine/threonine-protein kinase WNK9 (417 aa).

The tract at residues 1 to 23 is disordered; that stretch reads MDLVEAEAEEQPPDEDGDEEGYV. The Protein kinase domain maps to 32–289; that stretch reads IRYDEIVGSG…ATELLKSSFL (258 aa). Residues 113–116 and lysine 163 contribute to the ATP site; that span reads TELF. Aspartate 180 serves as the catalytic Proton acceptor.

This sequence belongs to the protein kinase superfamily. Ser/Thr protein kinase family. WNK subfamily.

The enzyme catalyses L-seryl-[protein] + ATP = O-phospho-L-seryl-[protein] + ADP + H(+). The catalysed reaction is L-threonyl-[protein] + ATP = O-phospho-L-threonyl-[protein] + ADP + H(+). The chain is Probable serine/threonine-protein kinase WNK9 (WNK9) from Oryza sativa subsp. japonica (Rice).